A 233-amino-acid chain; its full sequence is ATP synthase subunit a, chloroplastic (233 aa).

The next 4 membrane-spanning stretches (helical) occupy residues 82-102, 121-141, 177-199, and 211-231; these read VPFIGTLFLFIFVSNWSGALI, INTTAALALLTSLAYFYAGIS, LFGNILADELVVSVLTLLVPLIV, and SSIQALIFATLAAAYIGEAIE.

It belongs to the ATPase A chain family. F-type ATPases have 2 components, CF(1) - the catalytic core - and CF(0) - the membrane proton channel. CF(1) has five subunits: alpha(3), beta(3), gamma(1), delta(1), epsilon(1). CF(0) has four main subunits: a, b, b' and c.

Its subcellular location is the plastid. It is found in the chloroplast thylakoid membrane. Functionally, key component of the proton channel; it plays a direct role in the translocation of protons across the membrane. This Galdieria sulphuraria (Red alga) protein is ATP synthase subunit a, chloroplastic.